The sequence spans 359 residues: Beta-1,3-galactosyltransferase bre-2 (359 aa).

At 1-11 (MRQSRRASSRV) the chain is on the cytoplasmic side. A helical; Signal-anchor for type II membrane protein membrane pass occupies residues 12–29 (NRLVVIFIIVASGFLLLY). Over 30–359 (KNTQQFTQID…NPDLEELKEK (330 aa)) the chain is Lumenal. N-linked (GlcNAc...) asparagine glycosylation is found at asparagine 73, asparagine 163, and asparagine 209.

Belongs to the glycosyltransferase 31 family.

It is found in the golgi apparatus membrane. Its pathway is protein modification; protein glycosylation. Transfers N-acetylgalactosamine onto carbohydrate substrates. Involved in susceptibility to pore-forming crystal toxins in conjunction with bre-1, bre-3, bre-4, and bre-5. Involved in resistance to the nematotoxic C.cinerea galectin Cgl2. This chain is Beta-1,3-galactosyltransferase bre-2, found in Caenorhabditis elegans.